A 416-amino-acid chain; its full sequence is Advanced glycosylation end product-specific receptor (416 aa).

An N-terminal signal peptide occupies residues 1–22 (MAAGAVVGAWMLVLSLGGTVTG). The region spanning 23 to 115 (DQNITARIGK…KETKSNYRVR (93 aa)) is the Ig-like V-type domain. Over 23–352 (DQNITARIGK…VEGPGLETLA (330 aa)) the chain is Extracellular. N-linked (GlcNAc...) asparagine glycans are attached at residues asparagine 25 and asparagine 80. 2 cysteine pairs are disulfide-bonded: cysteine 38–cysteine 98 and cysteine 143–cysteine 207. Ig-like C2-type domains are found at residues 123–220 (PEIV…RALH) and 238–327 (PNVD…RAVS). A helical transmembrane segment spans residues 353 to 373 (LTLGILGGLGTVALLIGVIVW). Over 374 to 416 (HRRRQRKGQERKVPENQEEEEEERAELNQPEEPEAAESSTGGP) the chain is Cytoplasmic. The disordered stretch occupies residues 377–416 (RQRKGQERKVPENQEEEEEERAELNQPEEPEAAESSTGGP). Over residues 389–408 (NQEEEEEERAELNQPEEPEA) the composition is skewed to acidic residues.

Constitutive homodimer; disulfide-linked. Forms homooligomers. Interacts with S100A1 and APP. Interacts with S100B, S100A12 and S100A14. Interacts with TIRAP. Interacts with HMGB1. Interacts with LGP2; this interaction plays an important role in AGER-mediated pro-inflammatory responses and cytokine release. Interacts with double-strand break repair protein MRE11 which is a core component of the MRN complex; the interaction enhances MRE11 endonuclease activity and promotes DNA repair. Interacts with the MCM2-7 complex via interaction with complex member MCM2; the interaction is increased following DNA replication stress and stabilizes the MCM2-7 complex at replication forks. In terms of processing, phosphorylated on its cytoplasmic domain by PKCzeta/PRKCZ upon ligand binding. Phosphorylated by ATM following DNA damage. Post-translationally, targeted by the ubiquitin E3 ligase subunit FBXO10 to mediate its ubiquitination and degradation. In terms of tissue distribution, endothelial cells.

The protein localises to the cell membrane. It localises to the cell projection. The protein resides in the phagocytic cup. Its subcellular location is the early endosome. It is found in the nucleus. In terms of biological role, cell surface pattern recognition receptor that senses endogenous stress signals with a broad ligand repertoire including advanced glycation end products, S100 proteins, high-mobility group box 1 protein/HMGB1, amyloid beta/APP oligomers, nucleic acids, histones, phospholipids and glycosaminoglycans. Advanced glycosylation end products are nonenzymatically glycosylated proteins which accumulate in vascular tissue in aging and at an accelerated rate in diabetes. These ligands accumulate at inflammatory sites during the pathogenesis of various diseases including diabetes, vascular complications, neurodegenerative disorders and cancers, and RAGE transduces their binding into pro-inflammatory responses. Upon ligand binding, uses TIRAP and MYD88 as adapters to transduce the signal ultimately leading to the induction of inflammatory cytokines IL6, IL8 and TNFalpha through activation of NF-kappa-B. Interaction with S100A12 on endothelium, mononuclear phagocytes, and lymphocytes triggers cellular activation, with generation of key pro-inflammatory mediators. Interaction with S100B after myocardial infarction may play a role in myocyte apoptosis by activating ERK1/2 and p53/TP53 signaling. Contributes to the translocation of amyloid-beta peptide (ABPP) across the cell membrane from the extracellular to the intracellular space in cortical neurons. ABPP-initiated RAGE signaling, especially stimulation of p38 mitogen-activated protein kinase (MAPK), has the capacity to drive a transport system delivering ABPP as a complex with RAGE to the intraneuronal space. Participates in endothelial albumin transcytosis together with HMGB1 through the RAGE/SRC/Caveolin-1 pathway, leading to endothelial hyperpermeability. Mediates the loading of HMGB1 in extracellular vesicles (EVs) that shuttle HMGB1 to hepatocytes by transferrin-mediated endocytosis and subsequently promote hepatocyte pyroptosis by activating the NLRP3 inflammasome. Binds to DNA and promotes extracellular hypomethylated DNA (CpG DNA) uptake by cells via the endosomal route to activate inflammatory responses. Mediates phagocytosis by non-professional phagocytes (NPP) and this is enhanced by binding to ligands including RNA, DNA, HMGB1 and histones. Promotes NPP-mediated phagocytosis of Saccharomyces cerevisiae spores by binding to RNA attached to the spore wall. Also promotes NPP-mediated phagocytosis of apoptotic cells. Following DNA damage, recruited to DNA double-strand break sites where it colocalizes with the MRN repair complex via interaction with double-strand break repair protein MRE11. Enhances the endonuclease activity of MRE11, promoting the end resection of damaged DNA. Promotes DNA damage repair in trophoblasts which enhances trophoblast invasion and contributes to placental development and maintenance. Protects cells from DNA replication stress by localizing to damaged replication forks where it stabilizes the MCM2-7 complex and promotes faithful progression of the replication fork. The protein is Advanced glycosylation end product-specific receptor (AGER) of Bos taurus (Bovine).